The primary structure comprises 161 residues: MSIVTKSIVNADAEARYLSPGELDRIKSFVLSGQRRLRIAQILTDNRERIVKQGGQQLFQKRPDVVSPGGNAYGEEMTATCLRDLDYYLRLVTYGIVAGDVTPIEEIGLVGVKEMYNSLGTPISGVAVGVKCMKSVACSLLAGEDSAEAGFYFDYTLGAMQ.

Asn-71 carries the post-translational modification N4-methylasparagine. Cys-81 is a binding site for (2R,3E)-phycocyanobilin.

This sequence belongs to the phycobiliprotein family. Heterodimer of an alpha and a beta chain. Post-translationally, contains one covalently linked phycocyanobilin chromophore.

It is found in the plastid. It localises to the chloroplast thylakoid membrane. Its function is as follows. Light-harvesting photosynthetic bile pigment-protein from the phycobiliprotein complex. Allophycocyanin has a maximum absorption at approximately 650 nanometers. The polypeptide is Allophycocyanin alpha chain (apcA) (Pyropia haitanensis (Red seaweed)).